The following is a 247-amino-acid chain: Phosphoribosylaminoimidazole-succinocarboxamide synthase (247 aa).

Belongs to the SAICAR synthetase family.

The catalysed reaction is 5-amino-1-(5-phospho-D-ribosyl)imidazole-4-carboxylate + L-aspartate + ATP = (2S)-2-[5-amino-1-(5-phospho-beta-D-ribosyl)imidazole-4-carboxamido]succinate + ADP + phosphate + 2 H(+). Its pathway is purine metabolism; IMP biosynthesis via de novo pathway; 5-amino-1-(5-phospho-D-ribosyl)imidazole-4-carboxamide from 5-amino-1-(5-phospho-D-ribosyl)imidazole-4-carboxylate: step 1/2. This is Phosphoribosylaminoimidazole-succinocarboxamide synthase from Synechococcus sp. (strain JA-2-3B'a(2-13)) (Cyanobacteria bacterium Yellowstone B-Prime).